Reading from the N-terminus, the 312-residue chain is Olfactory receptor 1D5 (312 aa).

The Extracellular segment spans residues 1-25 (MDGDNQSENSQFLLLGISESPEQQQ). An N-linked (GlcNAc...) asparagine glycan is attached at Asn-5. A helical membrane pass occupies residues 26 to 49 (ILFWMFLSMYLVTVLGNVLIILAI). Residues 50–57 (SSDSRLHT) are Cytoplasmic-facing. The helical transmembrane segment at 58–79 (PMYFFLANLSFTDLFFVTNTIP) threads the bilayer. Topologically, residues 80–100 (KMLVNLQSQNKAISYAGCLTQ) are extracellular. A disulfide bond links Cys-97 and Cys-189. Residues 101 to 120 (LYFLVSLVTLDNLILAVMAY) traverse the membrane as a helical segment. Topologically, residues 121 to 140 (DRYVAICCPLHYVTAMSPGL) are cytoplasmic. A helical membrane pass occupies residues 141–158 (CVLLLSLCWGLSVFYGLL). Residues 159–196 (LTLLLTRVTFCGPREIHYLFCDMYILLRLACSNTHIIH) are Extracellular-facing. A helical membrane pass occupies residues 197-220 (TVLVATGCFIFLTPLGFMTTSYVR). Residues 221-237 (IVRTILQIPSASKKYKA) lie on the Cytoplasmic side of the membrane. Residues 238–260 (FSTCASHLGVVSLFYGTLAMVYL) traverse the membrane as a helical segment. Residues 261 to 271 (QPLHTYSMKDS) lie on the Extracellular side of the membrane. Residues 272 to 291 (VATVMYAVVTPMMNPFIHSL) form a helical membrane-spanning segment. The Cytoplasmic portion of the chain corresponds to 292–312 (RNKDMHGALGRVLRRLFQRPK).

This sequence belongs to the G-protein coupled receptor 1 family.

It localises to the cell membrane. Functionally, odorant receptor. The chain is Olfactory receptor 1D5 (OR1D5) from Pan troglodytes (Chimpanzee).